The following is a 727-amino-acid chain: Catalase-peroxidase (727 aa).

Residues 95–218 (WHSAGTYRII…LAAVQMGLIY (124 aa)) constitute a cross-link (tryptophyl-tyrosyl-methioninium (Trp-Tyr) (with M-244)). H96 (proton acceptor) is an active-site residue. Positions 218-244 (YVNPEGPNGEPDVLGAAKDIKESFGKM) form a cross-link, tryptophyl-tyrosyl-methioninium (Tyr-Met) (with W-95). Position 259 (H259) interacts with heme b.

It belongs to the peroxidase family. Peroxidase/catalase subfamily. In terms of assembly, homodimer or homotetramer. Heme b serves as cofactor. Post-translationally, formation of the three residue Trp-Tyr-Met cross-link is important for the catalase, but not the peroxidase activity of the enzyme.

It catalyses the reaction H2O2 + AH2 = A + 2 H2O. The catalysed reaction is 2 H2O2 = O2 + 2 H2O. In terms of biological role, bifunctional enzyme with both catalase and broad-spectrum peroxidase activity. In Persephonella marina (strain DSM 14350 / EX-H1), this protein is Catalase-peroxidase.